We begin with the raw amino-acid sequence, 74 residues long: High-potential iron-sulfur protein isozyme 2 (74 aa).

Cys36, Cys39, Cys53, and Cys67 together coordinate [4Fe-4S] cluster.

As to quaternary structure, homodimer.

Specific class of high-redox-potential 4Fe-4S ferredoxins. Functions in anaerobic electron transport in most purple and in some other photosynthetic bacteria and in at least one genus (Paracoccus) of halophilic, denitrifying bacteria. In Ectothiorhodospira mobilis, this protein is High-potential iron-sulfur protein isozyme 2.